A 238-amino-acid chain; its full sequence is UDP-2,3-diacylglucosamine hydrolase (238 aa).

Mn(2+) is bound by residues aspartate 8, histidine 10, aspartate 41, asparagine 78, and histidine 113. 78–79 is a substrate binding site; sequence NR. Aspartate 121, serine 159, asparagine 163, lysine 166, and histidine 194 together coordinate substrate. The Mn(2+) site is built by histidine 194 and histidine 196.

Belongs to the LpxH family. Requires Mn(2+) as cofactor.

The protein localises to the cell inner membrane. The catalysed reaction is UDP-2-N,3-O-bis[(3R)-3-hydroxytetradecanoyl]-alpha-D-glucosamine + H2O = 2-N,3-O-bis[(3R)-3-hydroxytetradecanoyl]-alpha-D-glucosaminyl 1-phosphate + UMP + 2 H(+). It participates in glycolipid biosynthesis; lipid IV(A) biosynthesis; lipid IV(A) from (3R)-3-hydroxytetradecanoyl-[acyl-carrier-protein] and UDP-N-acetyl-alpha-D-glucosamine: step 4/6. Its function is as follows. Hydrolyzes the pyrophosphate bond of UDP-2,3-diacylglucosamine to yield 2,3-diacylglucosamine 1-phosphate (lipid X) and UMP by catalyzing the attack of water at the alpha-P atom. Involved in the biosynthesis of lipid A, a phosphorylated glycolipid that anchors the lipopolysaccharide to the outer membrane of the cell. This chain is UDP-2,3-diacylglucosamine hydrolase, found in Shewanella pealeana (strain ATCC 700345 / ANG-SQ1).